Consider the following 811-residue polypeptide: MLALRSFFYLLLKFPLKLLVRCKIITDSQNITDQPNQPIFYIVRHQSASDLLALQSACKKQNLPDPLGKVTINGESFNRTLCLAKSTPLCSWRKSSKTTATAQGLALLNQHVIDENIDAKLIPANLIWGRTPTKERKNLNIGTLLADQESPNWLRKFFIVLFLGRDTLVRFSEAFSLRNISDNHGSDEAAAHKFLRVARFHFHRQTIAAKGPRLMHRKQMFTALFANPSVKRIISDEAKNKKVSEAEIKKKALVMMNEIAGDYSVSWLRFGEIILHWLWKRLYSAIKVSNAKVLRKLAQDGHEIIYVPCHRSHMDYLLLSYVILQEGLVMPRIAAGINLNFWPAGTIFRKGGAFFIRRSFGGNRLYSTIFREYLGLLFERGYGVKYYTEGGRSRTGRVLAPKTGMLAMTIQSLLRGIDRPLTLVPVYLGYEHVMEVGTYHKELSGSEKKGESMFGVLKAIKSLRNYGNGYVNFGEPMNINEFLNKQVPDWKDSIDPIDPQKPSWLTPTVNVLADQVMENINKSAALNGVALIALILHASKNKALSKLELETQLDFFLNIQRQAPFSEQLTIPEETGAELLTHVISLNKVTITEDSFGSLVSLSETANTEMRYYRNNILHTYVVPALVCRLLDKHSKINQDELVIKVQNVTALLKEDLYLYQDSTHVEQQTLRVLTVLKEMEIAKQTKAGFWSLSDDVGLLSQVHAMAECIDESLQRLAIITSLTSRLAPLSKRDLETKVVAIAKRLSVLNNINAPEFIDKRAQSTLIATIREQGYIDLDDDGLLIASSTMAEIKATVINLVDIEVLQSIAR.

The HXXXXD motif signature appears at 309–314 (CHRSHM).

The protein belongs to the GPAT/DAPAT family.

The protein localises to the cell inner membrane. It catalyses the reaction sn-glycerol 3-phosphate + an acyl-CoA = a 1-acyl-sn-glycero-3-phosphate + CoA. It functions in the pathway phospholipid metabolism; CDP-diacylglycerol biosynthesis; CDP-diacylglycerol from sn-glycerol 3-phosphate: step 1/3. The chain is Glycerol-3-phosphate acyltransferase from Colwellia psychrerythraea (strain 34H / ATCC BAA-681) (Vibrio psychroerythus).